We begin with the raw amino-acid sequence, 132 residues long: Small ribosomal subunit protein uS11 (132 aa).

Positions 1–16 (MAAGMKGKRSRRRKER) are enriched in basic residues. A disordered region spans residues 1–20 (MAAGMKGKRSRRRKERKNVE).

The protein belongs to the universal ribosomal protein uS11 family. As to quaternary structure, part of the 30S ribosomal subunit. Interacts with proteins S7 and S18. Binds to IF-3.

Functionally, located on the platform of the 30S subunit, it bridges several disparate RNA helices of the 16S rRNA. Forms part of the Shine-Dalgarno cleft in the 70S ribosome. In Clostridium botulinum (strain Hall / ATCC 3502 / NCTC 13319 / Type A), this protein is Small ribosomal subunit protein uS11.